Here is a 609-residue protein sequence, read N- to C-terminus: Myoneurin (609 aa).

The BTB domain occupies 24–89; the sequence is CDCTILIGDF…IYSGNLNYDS (66 aa). 2 short sequence motifs (nuclear localization signal) span residues 172 to 188 and 257 to 262; these read KKSQ…RSHQ and QKPAKL. 8 C2H2-type zinc fingers span residues 301–323, 329–351, 357–380, 386–408, 414–436, 442–464, 470–492, and 498–521; these read PVCN…MRIH, YVCH…VRTH, YQCK…RMHH, YKCD…ARKH, YVCD…VRRH, YVCD…ARKH, YICG…FRSH, and FVCE…LKMH. Residues 528-553 are disordered; that stretch reads IEMKSAENSSSSEDSTTKSPEPESLE. The span at 533–546 shows a compositional bias: low complexity; the sequence is AENSSSSEDSTTKS.

It localises to the nucleus. The polypeptide is Myoneurin (mynn) (Xenopus laevis (African clawed frog)).